We begin with the raw amino-acid sequence, 426 residues long: Histidine--tRNA ligase (426 aa).

It belongs to the class-II aminoacyl-tRNA synthetase family. As to quaternary structure, homodimer.

It localises to the cytoplasm. The enzyme catalyses tRNA(His) + L-histidine + ATP = L-histidyl-tRNA(His) + AMP + diphosphate + H(+). The chain is Histidine--tRNA ligase from Legionella pneumophila (strain Lens).